Reading from the N-terminus, the 423-residue chain is Glucose-1-phosphate adenylyltransferase (423 aa).

Alpha-D-glucose 1-phosphate is bound by residues Tyr100, Gly165, 180–181 (EK), and Ser191.

It belongs to the bacterial/plant glucose-1-phosphate adenylyltransferase family. Homotetramer.

The catalysed reaction is alpha-D-glucose 1-phosphate + ATP + H(+) = ADP-alpha-D-glucose + diphosphate. The protein operates within glycan biosynthesis; glycogen biosynthesis. Functionally, involved in the biosynthesis of ADP-glucose, a building block required for the elongation reactions to produce glycogen. Catalyzes the reaction between ATP and alpha-D-glucose 1-phosphate (G1P) to produce pyrophosphate and ADP-Glc. The chain is Glucose-1-phosphate adenylyltransferase from Lachnospira eligens (strain ATCC 27750 / DSM 3376 / VPI C15-48 / C15-B4) (Eubacterium eligens).